Reading from the N-terminus, the 218-residue chain is MACGLALKRPLQHEYESFLTDETYNGEAKRARTQCPPFRAQMGTIAATLPSTSTFAQKFKEQEESVFQAATLMTRLSRNQLKTYLSSEVKNLRKRKAIPRSNDFDDDGDQRGDGCSSNYSKAYRAPSSPKSGSDSEGEAPSTSVTDRSSAKREFTMANVQMICERLLKQQEIRLRNEFEMVLTKKLDEQHQQYVQFAAEQLNSKCVSTGDDYSYSYLS.

Residues 96–150 are disordered; it reads KAIPRSNDFDDDGDQRGDGCSSNYSKAYRAPSSPKSGSDSEGEAPSTSVTDRSSA. Over residues 128-147 the composition is skewed to polar residues; the sequence is SPKSGSDSEGEAPSTSVTDR.

It belongs to the akirin family. As to quaternary structure, interacts with hda-1, a component of the NuRD complex. Interacts with let-418, a component of the NuRD and MEC complexes. Interacts with the transcription factor ceh-18. Interacts with ima-2. In terms of tissue distribution, localizes to somatic tissues throughout the body, including muscle cells. Expressed in lateral epithelial seam cells, the hyp7 epidermal syncytium, and multiple head and tail neurons.

Its subcellular location is the nucleus. Its function is as follows. Molecular adapter that acts as a bridge between a variety of multiprotein complexes, and which is involved in antifungal innate immunity, development of the muscle and sister chromatid cohesion. Plays a role in antifungal innate immunity by acting as a bridge between components of the NuRD (Nucleosome Remodeling and Deacetylase) and MEC chromatin remodeling complexes. NuRD and MEC complexes bind to the promoters of antimicrobial peptide genes and may recruit other proteins such as ceh-18 to control gene expression in response to fungal infection. During meiotic prophase I, plays a role in the disassembly of synaptonemal complex proteins and in the regulation of chromosome condensation and segregation. Together with nuclear import receptor ima-2, required for the import and load of cohesin complex proteins in meiotic nuclei, possibly by acting as a bridge between ima-2 and cohesins. Required for embryonic development of muscle tissue. The polypeptide is Akirin (Caenorhabditis elegans).